The following is a 197-amino-acid chain: Inner membrane-spanning protein YciB (197 aa).

Transmembrane regions (helical) follow at residues 36-56 (IYSA…ALFL), 64-84 (GQWL…TFHS), 90-110 (WKAP…HFIG), 135-155 (LAWI…AFTF), and 162-182 (FKVF…GVYL).

Belongs to the YciB family.

It localises to the cell inner membrane. Plays a role in cell envelope biogenesis, maintenance of cell envelope integrity and membrane homeostasis. The chain is Inner membrane-spanning protein YciB from Pseudomonas putida (strain ATCC 700007 / DSM 6899 / JCM 31910 / BCRC 17059 / LMG 24140 / F1).